The sequence spans 605 residues: Elongation factor 4 (605 aa).

One can recognise a tr-type G domain in the interval 11 to 193 (EKIRNFSIIA…QIVEKVPAPT (183 aa)). Residues 23-28 (DHGKST) and 140-143 (NKID) contribute to the GTP site.

Belongs to the TRAFAC class translation factor GTPase superfamily. Classic translation factor GTPase family. LepA subfamily.

Its subcellular location is the cell membrane. The enzyme catalyses GTP + H2O = GDP + phosphate + H(+). Its function is as follows. Required for accurate and efficient protein synthesis under certain stress conditions. May act as a fidelity factor of the translation reaction, by catalyzing a one-codon backward translocation of tRNAs on improperly translocated ribosomes. Back-translocation proceeds from a post-translocation (POST) complex to a pre-translocation (PRE) complex, thus giving elongation factor G a second chance to translocate the tRNAs correctly. Binds to ribosomes in a GTP-dependent manner. This is Elongation factor 4 from Streptococcus pyogenes serotype M4 (strain MGAS10750).